The primary structure comprises 178 residues: Caveolin-1 (178 aa).

N-acetylserine is present on S2. At S2 the chain carries Phosphoserine. A required for homooligomerization region spans residues 2 to 94 (SGGKYVDSEG…WKASFTTFTV (93 aa)). Topologically, residues 2–104 (SGGKYVDSEG…TKYWFYRLLS (103 aa)) are cytoplasmic. K5 bears the N6-acetyllysine; alternate mark. K5 is covalently cross-linked (Glycyl lysine isopeptide (Lys-Gly) (interchain with G-Cter in ubiquitin); alternate). At Y6 the chain carries Phosphotyrosine. At S9 the chain carries Phosphoserine. Y14 carries the phosphotyrosine; by ABL1 modification. At Y25 the chain carries Phosphotyrosine. Residues K26, K30, K39, K47, and K57 each participate in a glycyl lysine isopeptide (Lys-Gly) (interchain with G-Cter in ubiquitin) cross-link. Residues 82 to 94 (DGIWKASFTTFTV) form an interaction with CAVIN3 region. The helical intramembrane region spans 105–125 (ALFGIPMALIWGIYFAILSFL). Residues 126 to 178 (HIWAVVPCIKSFLIEIQCVSRVYSIYVHTFCDPFFEAVGKIFSSIRINMQKEI) are Cytoplasmic-facing. The interval 131 to 142 (VPCIKSFLIEIQ) is interacts with SPRY1, SPRY2, SPRY3 and SPRY4. 3 S-palmitoyl cysteine lipidation sites follow: C133, C143, and C156. An interacts with SPRY1, SPRY2, and SPRY4 region spans residues 149–160 (SIYVHTFCDPFF). The interval 167-178 (FSSIRINMQKEI) is interacts with SPRY1, SPRY2, SPRY3 and SPRY4.

It belongs to the caveolin family. In terms of assembly, homooligomer. Interacts with GLIPR2. Interacts with NOSTRIN. Interacts with SNAP25 and STX1A. Interacts (via the N-terminus) with DPP4; the interaction is direct. Interacts with CTNNB1, CDH1 and JUP. Interacts with PACSIN2; this interaction induces membrane tubulation. Interacts with SLC7A9. Interacts with BMX and BTK. Interacts with TGFBR1. Interacts with CAVIN3 (via leucine-zipper domain) in a cholesterol-sensitive manner. Interacts with CAVIN1. Interacts with EHD2 in a cholesterol-dependent manner. Forms a ternary complex with UBXN6 and VCP; mediates CAV1 targeting to lysosomes for degradation. Interacts with ABCG1; this interaction regulates ABCG1-mediated cholesterol efflux. Interacts with NEU3; this interaction enhances NEU3 sialidase activity within caveola. Interacts (via C-terminus) with SPRY1, SPRY2 (via C-terminus), SPRY3, and SPRY4. Interacts with IGFBP5; this interaction allows trafficking of IGFBP5 from the plasma membrane to the nucleus. Post-translationally, phosphorylated at Tyr-14 by ABL1 in response to oxidative stress. Ubiquitinated. Undergo monoubiquitination and multi- and/or polyubiquitination. Monoubiquitination of N-terminal lysines promotes integration in a ternary complex with UBXN6 and VCP which promotes oligomeric CAV1 targeting to lysosomes for degradation. Ubiquitinated by ZNRF1; leading to degradation and modulation of the TLR4-mediated immune response.

The protein localises to the golgi apparatus membrane. The protein resides in the cell membrane. Its subcellular location is the membrane. It is found in the caveola. It localises to the membrane raft. Its function is as follows. May act as a scaffolding protein within caveolar membranes. Forms a stable heterooligomeric complex with CAV2 that targets to lipid rafts and drives caveolae formation. Mediates the recruitment of CAVIN proteins (CAVIN1/2/3/4) to the caveolae. Interacts directly with G-protein alpha subunits and can functionally regulate their activity. Involved in the costimulatory signal essential for T-cell receptor (TCR)-mediated T-cell activation. Its binding to DPP4 induces T-cell proliferation and NF-kappa-B activation in a T-cell receptor/CD3-dependent manner. Recruits CTNNB1 to caveolar membranes and may regulate CTNNB1-mediated signaling through the Wnt pathway. Negatively regulates TGFB1-mediated activation of SMAD2/3 by mediating the internalization of TGFBR1 from membrane rafts leading to its subsequent degradation. Binds 20(S)-hydroxycholesterol (20(S)-OHC). This chain is Caveolin-1 (CAV1), found in Mustela putorius furo (European domestic ferret).